Here is a 301-residue protein sequence, read N- to C-terminus: Sulfate adenylyltransferase subunit 2 2 (301 aa).

Belongs to the PAPS reductase family. CysD subfamily. As to quaternary structure, heterodimer composed of CysD, the smaller subunit, and CysN.

The catalysed reaction is sulfate + ATP + H(+) = adenosine 5'-phosphosulfate + diphosphate. It functions in the pathway sulfur metabolism; hydrogen sulfide biosynthesis; sulfite from sulfate: step 1/3. In terms of biological role, with CysN forms the ATP sulfurylase (ATPS) that catalyzes the adenylation of sulfate producing adenosine 5'-phosphosulfate (APS) and diphosphate, the first enzymatic step in sulfur assimilation pathway. APS synthesis involves the formation of a high-energy phosphoric-sulfuric acid anhydride bond driven by GTP hydrolysis by CysN coupled to ATP hydrolysis by CysD. This Shewanella sediminis (strain HAW-EB3) protein is Sulfate adenylyltransferase subunit 2 2.